The following is a 155-amino-acid chain: Large ribosomal subunit protein uL11 (155 aa).

It belongs to the universal ribosomal protein uL11 family. In terms of assembly, part of the ribosomal stalk of the 50S ribosomal subunit. Interacts with L10 and the large rRNA to form the base of the stalk. L10 forms an elongated spine to which L12 dimers bind in a sequential fashion forming a multimeric L10(L12)X complex.

Its function is as follows. Forms part of the ribosomal stalk which helps the ribosome interact with GTP-bound translation factors. This is Large ribosomal subunit protein uL11 from Picrophilus torridus (strain ATCC 700027 / DSM 9790 / JCM 10055 / NBRC 100828 / KAW 2/3).